The sequence spans 1648 residues: MRFAVLLALFGLALAARQSSVSEQYYRSGREYRYQFNGHLSAGLPIPGEENSATRIQSLIRIQPENGDFMRLQMTKTRFATSEEDRVLSFENMNEVPVSEKVEKVLSLPIRFSYRHGMVGEIEFSTEEQTWSSNIKKAVVNMLQVNLVKKGMSEKNEYETEHDNDFFLSNERTLEGECEVAYTKIEKSEKEQQWTKSINFEKCSLRPEIVYGRRYAEECNECRERDEKFSSTVFFYNITGTPEEFLINSVELQSKHMFAPVTEQKQLITARITNRLELVYSGEQKEQIEAVRNSDKKENLLYNPEHEIAEEKFAQTGDEKYLRRIPNYVDQGEIIRQQLNRLSKQTEQIELESNHVHARLVKSLRFATEDNLSSIRSLVSQKSEVVQSLYWDALAIAGTKVTVSHLLEKINNKEISPMKASQLMKILAEVRIPSEQIAQELHRFCESDIVSRSAVLRQSCWLSYGSVLNGVCGQTKNVYGSEITETRKQCTRQMKEKYIRELIEKMNQAESRYEKVLFVKAIANAGIDTSVVELEKIIRNQEVEKTVRMQAIDALRRLRLSMPKKIQNVLMPVYRNHKETPGIRISALHMIMQTQPTSGVLDMIVRGLEKERSQQVRVYTWSTLKTLSESENPAEKEIRRRVSQSLASIPVEEQKYLESKHKTFNWFNMQSGATLNWATIFSNDSVLPKEITASLETVFGGEWNKYLAQIGLYQNNLDSVLSKLLQKVEETGLEQLVVRGKRSSSFFRPAEMLRSLVESLRISHRQVPAMSPIAMIYLRYKDQDYAFLPIDIDTLPEMIRRVARDGQLDLSEIEKVLTQAARFTVAGSAFFHETVRKVPSALGMPQVMTSKMPTVAQMNGEVKFDLEPLNSDKFTGLRLRVKAEPHVASTHVCKLELFTPIGGQGIKLLHGGRIQAPIDSEIEINWEKKLIVKATIKSPEQKRHIAHFMTRPVLFSREVTMDKQMRQYPEPREKTIQLRENRFPIHAFERQYFEQTGLKMTVSGHYRRPFTTAFTLGESIMMSSSSLPRMLSLKEVVAYMSFSGFEETEMDEPRLLNRFYEKETELFETEKNVEYEQEDKEPKSSQLQSQIRKVKSEGKAYKHRVHMKIHTVGGPKTQEAECEIRALCDERVRFCRLNLDASRSPIQGESRQWQLKSSAEWLYPEVPSTMKKMLESRREWNAMWTGKWGSEKQNEVTIRVQGEQSSEQKFWMKKAEREQSPLTSGGQASRAAQLNQYNIHATYEVTPETEFWMENVYSMFKTYYFFSAEVQPKQNKENRIQCQITLEPFTRQLFNVTVMSPKEKLVLELENQQTPFRLPAVNIGREFGRVQSVRHVVKAVERQTRPECIVKSKEIQTFDEVFYRTPVMECFSVLAKDCSENPDFAVLMRKVSKRGEEKMWKVISRENVIELEKKSEEMSVRVNGKEISEDKWEDFGISQRGEEKFFIDAEKVTVEFDGFQAKIQMSSLYKNKQCGLCGHYDGEKTNEFRRADNEETDDIEEFSRSYLSKDDECEVDEQEMTNKRNYKVLREETSSSEEISESLIELYSEAFQSREAHHRLGRREDRQVCFSQQAWNKCLKSKDNKTETKNVHFKCLTETTRSPRISSVFSQADISENLSDVEGLPSLAEPSPHSRFLPCVIPSLSLSQ.

The signal sequence occupies residues 1-15; it reads MRFAVLLALFGLALA. In terms of domain architecture, Vitellogenin spans 26 to 691; that stretch reads YRSGREYRYQ…SNDSVLPKEI (666 aa). 2 disulfide bridges follow: Cys-178-Cys-203 and Cys-219-Cys-222. Residues Asn-237, Asn-371, and Asn-683 are each glycosylated (N-linked (GlcNAc...) asparagine). The disordered stretch occupies residues 1070-1092; it reads EKNVEYEQEDKEPKSSQLQSQIR. Residue Asn-1295 is glycosylated (N-linked (GlcNAc...) asparagine). The VWFD domain maps to 1346–1514; that stretch reads PECIVKSKEI…SYLSKDDECE (169 aa). 2 disulfides stabilise this stretch: Cys-1348–Cys-1477 and Cys-1370–Cys-1513. N-linked (GlcNAc...) asparagine glycosylation is found at Asn-1584 and Asn-1617.

In terms of processing, the precursor protein is probably further processed into vitellin polypeptides VT2 and VT3. Both VT2 and VT3 polypeptides seem to be N-glycosylated.

The protein localises to the secreted. In terms of biological role, precursor of the egg-yolk proteins that are sources of nutrients during embryonic development. This chain is Vitellogenin-6 (vit-6), found in Oscheius tipulae.